Reading from the N-terminus, the 370-residue chain is Histidinol-phosphate aminotransferase (370 aa).

Position 223 is an N6-(pyridoxal phosphate)lysine (Lys223).

It belongs to the class-II pyridoxal-phosphate-dependent aminotransferase family. Histidinol-phosphate aminotransferase subfamily. Homodimer. Pyridoxal 5'-phosphate is required as a cofactor.

The catalysed reaction is L-histidinol phosphate + 2-oxoglutarate = 3-(imidazol-4-yl)-2-oxopropyl phosphate + L-glutamate. It functions in the pathway amino-acid biosynthesis; L-histidine biosynthesis; L-histidine from 5-phospho-alpha-D-ribose 1-diphosphate: step 7/9. The sequence is that of Histidinol-phosphate aminotransferase from Methylobacterium nodulans (strain LMG 21967 / CNCM I-2342 / ORS 2060).